Reading from the N-terminus, the 1820-residue chain is Sodium channel protein (1820 aa).

Topologically, residues 1–117 (MARKFSSARP…FNPIRRGAIR (117 aa)) are cytoplasmic. An I repeat occupies 108–410 (FNPIRRGAIR…VAMAYEEQNQ (303 aa)). The chain crosses the membrane as a helical span at residues 118–138 (VFVNSAFNFFIMFTIFSNCIF). Topologically, residues 139 to 149 (MTISNPPAWSK) are extracellular. The helical transmembrane segment at 150 to 171 (IVEYTFTGIYTFEVIVKVLSRG) threads the bilayer. Over 172 to 176 (FCIGH) the chain is Cytoplasmic. The chain crosses the membrane as a helical span at residues 177–197 (FTFLRDPWNWLDFSVVTMTYI). At 198–203 (TEFIDL) the chain is on the extracellular side. Residues 204–224 (RNVSALRTFRVLRALKTITIF) form a helical; Voltage-sensor membrane-spanning segment. At 225 to 243 (PGLKTIVRALIESMKQMGD) the chain is on the cytoplasmic side. A helical membrane pass occupies residues 244–264 (VVILTVFSLAVFTLAGMQLFM). Over 265 to 346 (GNLRHKCIRW…PNYGYTNYDN (82 aa)) the chain is Extracellular. A disulfide bridge links C271 with C324. N-linked (GlcNAc...) asparagine glycosylation is found at N278, N288, and N317. The interval 285-342 (SAYNTTFDFTAYIENEENQYFLDGALDALLCGNNSDAGKCPEGYTCMKAGRNPNYGYT) is non-homologous region of repeat I. Positions 347 to 371 (FAWTFLCLFRLMLQDYWENLYQMTL) form an intramembrane region, pore-forming. The Extracellular portion of the chain corresponds to 372-378 (RAAGKSY). The chain crosses the membrane as a helical span at residues 379–402 (MVFFIMVIFLGSFYLINLILAVVA). Over 403–557 (MAYEEQNQAT…CCGPWVFLKK (155 aa)) the chain is Cytoplasmic. Residues 483–507 (SVKLSTEEQRSDSKSMDSKHSVDKP) are disordered. A compositionally biased stretch (basic and acidic residues) spans 487 to 507 (STEEQRSDSKSMDSKHSVDKP). Residues 548–811 (CCGPWVFLKK…EEDDEVNSLQ (264 aa)) form an II repeat. A helical membrane pass occupies residues 558-578 (WVHFVMMDPFTDLFITLCIIL). The Extracellular segment spans residues 579–599 (NTLFMSIEHHPMNESFQSLLS). Residue N591 is glycosylated (N-linked (GlcNAc...) asparagine). The chain crosses the membrane as a helical span at residues 600–620 (AGNLVFTTIFAAEMVLKIIAL). The Cytoplasmic portion of the chain corresponds to 621-625 (DPYYY). A helical membrane pass occupies residues 626–643 (FQQTWNIFDSIIVSLSLL). The Extracellular segment spans residues 644–650 (ELGLSNM). The chain crosses the membrane as a helical; Voltage-sensor span at residues 651–671 (QGMSVLRSLRLLRIFKLAKSW). Residues 672–690 (PTLNILIKIICNSVGALGN) are Cytoplasmic-facing. Residues 691–711 (LTIVLAIIVFIFALVGFQLFG) traverse the membrane as a helical segment. The Extracellular portion of the chain corresponds to 712–734 (KNYKEYVCKISDDCELPRWHMND). The pore-forming intramembrane region spans 735–755 (FFHSFLIVFRALCGEWIETMW). The Extracellular portion of the chain corresponds to 756–766 (DCMEVGGVPMC). A disulfide bridge links C757 with C766. The chain crosses the membrane as a helical span at residues 767–790 (LAVYMMVIIIGNLVMLNLFLALLL). Residues 791-1004 (SSFSSDNLSS…TIVEHDYFET (214 aa)) lie on the Cytoplasmic side of the membrane. Disordered regions lie at residues 844 to 864 (PPSD…DTLP) and 891 to 959 (VKGE…SKDP). Residues 896–910 (EIEEEGLVDSSDEED) are compositionally biased toward acidic residues. Over residues 924–935 (SVCSTVDYSPSE) the composition is skewed to polar residues. The span at 942–953 (EEEEEEEEEPEE) shows a compositional bias: acidic residues. The stretch at 988-1295 (NLRRTCYTIV…KKYYNAMKKL (308 aa)) is one III repeat. The chain crosses the membrane as a helical span at residues 1005–1025 (FIIFMILLSSGVLAFEDIYIW). Over 1026-1037 (RRRVIKVILEYA) the chain is Extracellular. The helical transmembrane segment at 1038–1058 (DKVFTYVFIVEMLLKWVAYGF) threads the bilayer. Topologically, residues 1059-1065 (KRYFTDA) are cytoplasmic. Residues 1066-1086 (WCWLDFVIVGASIMGITSSLL) traverse the membrane as a helical segment. Over 1087–1091 (GYEEL) the chain is Extracellular. The chain crosses the membrane as a helical; Voltage-sensor span at residues 1092–1112 (GAIKNLRTIRALRPLRALSRF). At 1113–1131 (EGMKVVVRALLGAIPSIMN) the chain is on the cytoplasmic side. The helical transmembrane segment at 1132-1152 (VLLVCLMFWLIFSIMGVNLFA) threads the bilayer. Residues 1153 to 1199 (GKFYRCINTTTDEILPVEEVNNRSDCMALMYTNEVRWVNLKVNYDNA) are Extracellular-facing. N1160 and N1174 each carry an N-linked (GlcNAc...) asparagine glycan. The tract at residues 1172–1194 (VNNRSDCMALMYTNEVRWVNLKV) is non-homologous region of repeat III. Positions 1200–1221 (GMGYLSLLQVSTFKGWMDIMYA) form an intramembrane region, pore-forming. Over 1222 to 1243 (AVDSREVEDQPIYEINVYMYLY) the chain is Extracellular. The chain crosses the membrane as a helical span at residues 1244–1264 (FVIFIVFGAFFTLNLFIGVII). Topologically, residues 1265–1320 (DNFNRQKQKLGGEDLFMTEEQKKYYNAMKKLGSKKAAKCIPRPSNVVQGVVYDIVT) are cytoplasmic. Residues 1304 to 1602 (IPRPSNVVQG…WHKFDVHGTQ (299 aa)) form an IV repeat. A helical membrane pass occupies residues 1321–1341 (QPFTDIFIMALICINMVAMMV). At 1342–1352 (ESEDQSQVKKD) the chain is on the extracellular side. The helical transmembrane segment at 1353–1376 (ILSQINVIFVIIFTVECLLKLLAL) threads the bilayer. Topologically, residues 1377 to 1380 (RQYF) are cytoplasmic. The chain crosses the membrane as a helical span at residues 1381-1398 (FTVGWNVFDFAVVVISII). At 1399–1416 (GLLLSDIIEKYFVSPTLF) the chain is on the extracellular side. Residues 1417–1437 (RVIRLARIARVLRLIRAAKGI) traverse the membrane as a helical; Voltage-sensor segment. The Cytoplasmic segment spans residues 1438–1453 (RTLLFALMMSLPALFN). Residues 1454-1474 (IGLLLFLIMFIFSIFGMSNFA) form a helical membrane-spanning segment. Residues 1475–1490 (YVKKQGGVDDIFNFET) are Extracellular-facing. The interval 1490-1505 (TFGNSMICLFEITTSA) is non-homologous region of repeat IV. The segment at residues 1491–1513 (FGNSMICLFEITTSAGWDGLLLP) is an intramembrane region (pore-forming). Topologically, residues 1514–1543 (TLNTGPPDCDPDVENPGTDVRGNCGNPGKG) are extracellular. The helical transmembrane segment at 1544–1567 (ITFFCSYIILSFLVVVNMYIAIIL) threads the bilayer. The Cytoplasmic segment spans residues 1568 to 1820 (ENFGVAQEES…GAIVVRESIV (253 aa)).

The protein belongs to the sodium channel (TC 1.A.1.10) family.

The protein localises to the cell membrane. Mediates the voltage-dependent sodium ion permeability of excitable membranes. Assuming opened or closed conformations in response to the voltage difference across the membrane, the protein forms a sodium-selective channel through which Na(+) ions may pass in accordance with their electrochemical gradient. The polypeptide is Sodium channel protein (Electrophorus electricus (Electric eel)).